The chain runs to 605 residues: DNA primase (605 aa).

The CHC2-type zinc finger occupies 37-61 (CPFHADKNPSMHINPIKGFYHCFAC). The Toprim domain occupies 248–329 (KEIIVCEGYM…DGKVAILQGG (82 aa)). Mg(2+)-binding residues include E254, D298, and D300.

Belongs to the DnaG primase family. In terms of assembly, monomer. Interacts with DnaB. Zn(2+) serves as cofactor. Mg(2+) is required as a cofactor.

The catalysed reaction is ssDNA + n NTP = ssDNA/pppN(pN)n-1 hybrid + (n-1) diphosphate.. In terms of biological role, RNA polymerase that catalyzes the synthesis of short RNA molecules used as primers for DNA polymerase during DNA replication. The sequence is that of DNA primase from Campylobacter jejuni subsp. jejuni serotype O:2 (strain ATCC 700819 / NCTC 11168).